Here is a 244-residue protein sequence, read N- to C-terminus: Carboxy-S-adenosyl-L-methionine synthase (244 aa).

S-adenosyl-L-methionine is bound by residues Tyr-38, 63–65 (GCS), 88–89 (DN), 116–117 (DI), Asn-131, and Arg-198.

It belongs to the class I-like SAM-binding methyltransferase superfamily. Cx-SAM synthase family. In terms of assembly, homodimer.

The catalysed reaction is prephenate + S-adenosyl-L-methionine = carboxy-S-adenosyl-L-methionine + 3-phenylpyruvate + H2O. Functionally, catalyzes the conversion of S-adenosyl-L-methionine (SAM) to carboxy-S-adenosyl-L-methionine (Cx-SAM). In Haemophilus ducreyi (strain 35000HP / ATCC 700724), this protein is Carboxy-S-adenosyl-L-methionine synthase.